A 172-amino-acid polypeptide reads, in one-letter code: uncharacterized protein (172 aa).

The first 21 residues, methionine 1–glycine 21, serve as a signal peptide directing secretion. Residue cysteine 22 is the site of N-palmitoyl cysteine attachment. The S-diacylglycerol cysteine moiety is linked to residue cysteine 22.

The protein localises to the cell membrane. This is an uncharacterized protein from Escherichia coli O157:H7.